A 943-amino-acid polypeptide reads, in one-letter code: Isoleucine--tRNA ligase (943 aa).

The 'HIGH' region motif lies at 58–68 (PYANGKIHIGH). Position 567 (Glu567) interacts with L-isoleucyl-5'-AMP. A 'KMSKS' region motif is present at residues 608 to 612 (KMSKS). Position 611 (Lys611) interacts with ATP. Zn(2+) contacts are provided by Cys906, Cys909, Cys926, and Cys929.

The protein belongs to the class-I aminoacyl-tRNA synthetase family. IleS type 1 subfamily. As to quaternary structure, monomer. It depends on Zn(2+) as a cofactor.

The protein resides in the cytoplasm. It carries out the reaction tRNA(Ile) + L-isoleucine + ATP = L-isoleucyl-tRNA(Ile) + AMP + diphosphate. Its function is as follows. Catalyzes the attachment of isoleucine to tRNA(Ile). As IleRS can inadvertently accommodate and process structurally similar amino acids such as valine, to avoid such errors it has two additional distinct tRNA(Ile)-dependent editing activities. One activity is designated as 'pretransfer' editing and involves the hydrolysis of activated Val-AMP. The other activity is designated 'posttransfer' editing and involves deacylation of mischarged Val-tRNA(Ile). This chain is Isoleucine--tRNA ligase, found in Pseudomonas entomophila (strain L48).